Consider the following 108-residue polypeptide: MKKMMTFLKKAKVKAFTLVEMLVVLLIISVLFLLFVPNLTKQKEAVNDKGKAAVVKVVESQAELYSLEKNEDASLRKLQADGRITEEQAKAYKEYNDKNGGANRKVND.

The first 13 residues, 1-13, serve as a signal peptide directing secretion; the sequence is MKKMMTFLKKAKV. Residues 14 to 39 form a may be involved in polymerization of ComGC region; the sequence is KAFTLVEMLVVLLIISVLFLLFVPNL. Phe16 is subject to N-methylphenylalanine. The helical transmembrane segment at 16 to 36 threads the bilayer; that stretch reads FTLVEMLVVLLIISVLFLLFV.

This sequence belongs to the ComGC family. The transformation pili are flexible filaments, consisting mainly of the major pilin ComGC and smaller amounts of the minor pilins, including at least ComGD, ComGF and ComGG, and perhaps ComGE. Homodimer. Forms higher-order multimers. Interacts with ComGG; the interaction is probably direct. In terms of processing, undergoes proteolytic cleavage.

It is found in the cell membrane. The protein resides in the cell surface. The protein localises to the fimbrium. Its subcellular location is the secreted. Major component of the type IV-like pilus (T4P) that plays a role in transformation. Transformation pili are dynamically extended and retracted, perhaps thereby promoting DNA uptake and transformation. Required for transformation. Required for DNA binding. This is Competence protein ComGC from Streptococcus pneumoniae serotype 4 (strain ATCC BAA-334 / TIGR4).